The sequence spans 413 residues: Serine/threonine transporter SstT (413 aa).

8 helical membrane-spanning segments follow: residues 19 to 39 (IFIGLILGLLVALVTPTLQNV), 61 to 81 (AVAPILIFVLVMAAIANKKIG), 89 to 109 (IIVLYLLGTFLAALSAVIAGF), 148 to 168 (ALFKANFVGVLAWSIGLGLAL), 189 to 209 (IVYVIIAFAPIGVFGLVSETL), 223 to 243 (LLAVLVGTMLFVAFVVNPILV), 297 to 317 (IPLGATINMAGAAITVTILTL), and 325 to 345 (IQISFFSALLLSVVASICACG).

This sequence belongs to the dicarboxylate/amino acid:cation symporter (DAACS) (TC 2.A.23) family.

The protein resides in the cell inner membrane. The enzyme catalyses L-serine(in) + Na(+)(in) = L-serine(out) + Na(+)(out). The catalysed reaction is L-threonine(in) + Na(+)(in) = L-threonine(out) + Na(+)(out). Functionally, involved in the import of serine and threonine into the cell, with the concomitant import of sodium (symport system). In Pasteurella multocida (strain Pm70), this protein is Serine/threonine transporter SstT.